Reading from the N-terminus, the 353-residue chain is Rhodopsin (353 aa).

Residues 1-36 lie on the Extracellular side of the membrane; it reads MNGTEGENFYIPFSNKTGLARSPFEYPQYYLAEPWK. N-linked (GlcNAc...) asparagine glycosylation is found at N2 and N15. A helical transmembrane segment spans residues 37–61; that stretch reads YSVLAAYMFFLILVGFPVNFLTLFV. Over 62–73 the chain is Cytoplasmic; it reads TVQHKKLRTPLN. The helical transmembrane segment at 74 to 96 threads the bilayer; the sequence is YILLNLAVANLFMVLFGFTLTMY. At 97 to 110 the chain is on the extracellular side; the sequence is SSMNGYFVFGPTMC. C110 and C187 are joined by a disulfide. A helical membrane pass occupies residues 111-133; sequence NFEGFFATLGGEMSLWSLVVLAI. A 'Ionic lock' involved in activated form stabilization motif is present at residues 134–136; it reads ERY. The Cytoplasmic portion of the chain corresponds to 134-152; the sequence is ERYIVICKPMGNFRFGSTH. The chain crosses the membrane as a helical span at residues 153–173; the sequence is AYMGVAFTWFMALSCAAPPLV. The Extracellular segment spans residues 174-202; that stretch reads GWSRYLPEGMQCSCGPDYYTLNPNFNNES. A helical transmembrane segment spans residues 203–224; the sequence is FVIYMFLVHFIIPFIVIFFCYG. The Cytoplasmic segment spans residues 225–252; it reads RLLCTVKEAAAAQQESASTQKAEKEVTR. A helical transmembrane segment spans residues 253-274; sequence MVVLMVIGFLVCWVPYASVAFY. Residues 275–286 lie on the Extracellular side of the membrane; that stretch reads IFTHQGSDFGAT. A helical transmembrane segment spans residues 287–308; sequence FMTVPAFFAKTSALYNPIIYIL. K296 is subject to N6-(retinylidene)lysine. At 309–353 the chain is on the cytoplasmic side; it reads MNKQFRNCMITTLCCGKNPLGDEDSGASTSKTEVSSVSTSQVSPA. Positions 330 to 353 are disordered; the sequence is DEDSGASTSKTEVSSVSTSQVSPA. Over residues 336–353 the composition is skewed to low complexity; sequence STSKTEVSSVSTSQVSPA.

Belongs to the G-protein coupled receptor 1 family. Opsin subfamily. Phosphorylated on some or all of the serine and threonine residues present in the C-terminal region. In terms of processing, contains one covalently linked retinal chromophore.

The protein localises to the membrane. It localises to the cell projection. Its subcellular location is the cilium. It is found in the photoreceptor outer segment. Its function is as follows. Photoreceptor required for image-forming vision at low light intensity. While most salt water fish species use retinal as chromophore, most freshwater fish use 3-dehydroretinal, or a mixture of retinal and 3-dehydroretinal. Light-induced isomerization of 11-cis to all-trans retinal triggers a conformational change that activates signaling via G-proteins. Subsequent receptor phosphorylation mediates displacement of the bound G-protein alpha subunit by arrestin and terminates signaling. The sequence is that of Rhodopsin (RHO) from Petromyzon marinus (Sea lamprey).